The sequence spans 228 residues: Phosphoribosylformylglycinamidine synthase subunit PurQ (228 aa).

A Glutamine amidotransferase type-1 domain is found at 2–225; sequence KAAVISFPGS…INQTEGADVR (224 aa). Cys86 acts as the Nucleophile in catalysis. Residues His194 and Glu196 contribute to the active site.

In terms of assembly, part of the FGAM synthase complex composed of 1 PurL, 1 PurQ and 2 PurS subunits.

The protein resides in the cytoplasm. The catalysed reaction is N(2)-formyl-N(1)-(5-phospho-beta-D-ribosyl)glycinamide + L-glutamine + ATP + H2O = 2-formamido-N(1)-(5-O-phospho-beta-D-ribosyl)acetamidine + L-glutamate + ADP + phosphate + H(+). The enzyme catalyses L-glutamine + H2O = L-glutamate + NH4(+). It functions in the pathway purine metabolism; IMP biosynthesis via de novo pathway; 5-amino-1-(5-phospho-D-ribosyl)imidazole from N(2)-formyl-N(1)-(5-phospho-D-ribosyl)glycinamide: step 1/2. In terms of biological role, part of the phosphoribosylformylglycinamidine synthase complex involved in the purines biosynthetic pathway. Catalyzes the ATP-dependent conversion of formylglycinamide ribonucleotide (FGAR) and glutamine to yield formylglycinamidine ribonucleotide (FGAM) and glutamate. The FGAM synthase complex is composed of three subunits. PurQ produces an ammonia molecule by converting glutamine to glutamate. PurL transfers the ammonia molecule to FGAR to form FGAM in an ATP-dependent manner. PurS interacts with PurQ and PurL and is thought to assist in the transfer of the ammonia molecule from PurQ to PurL. This is Phosphoribosylformylglycinamidine synthase subunit PurQ from Lacticaseibacillus casei (strain BL23) (Lactobacillus casei).